Reading from the N-terminus, the 97-residue chain is Transcription and mRNA export factor SUS1 (97 aa).

Belongs to the ENY2 family. Component of the nuclear pore complex (NPC)-associated TREX-2 complex (transcription and export complex 2), composed of at least SUS1, SAC3, THP1, SEM1, and CDC31. TREX-2 contains 2 SUS1 chains. The TREX-2 complex interacts with the nucleoporin NUP1. Component of the 1.8 MDa SAGA transcription coactivator-HAT complex. SAGA is built of 5 distinct domains with specialized functions. Within the SAGA complex, SUS1, SGF11, SGF73 and UBP8 form an additional subcomplex of SAGA called the DUB module (deubiquitination module). Interacts directly with THP1, SAC3, SGF11, and with the RNA polymerase II.

It localises to the nucleus. It is found in the nucleoplasm. Its subcellular location is the cytoplasm. The protein resides in the P-body. Its function is as follows. Involved in mRNA export coupled transcription activation by association with both the TREX-2 and the SAGA complexes. At the promoters, SAGA is required for recruitment of the basal transcription machinery. It influences RNA polymerase II transcriptional activity through different activities such as TBP interaction and promoter selectivity, interaction with transcription activators, and chromatin modification through histone acetylation and deubiquitination. Within the SAGA complex, participates in a subcomplex required for deubiquitination of H2B and for the maintenance of steady-state H3 methylation levels. The TREX-2 complex functions in docking export-competent ribonucleoprotein particles (mRNPs) to the nuclear entrance of the nuclear pore complex (nuclear basket). TREX-2 participates in mRNA export and accurate chromatin positioning in the nucleus by tethering genes to the nuclear periphery. May also be involved in cytoplasmic mRNA decay by interaction with components of P-bodies. This chain is Transcription and mRNA export factor SUS1, found in Meyerozyma guilliermondii (strain ATCC 6260 / CBS 566 / DSM 6381 / JCM 1539 / NBRC 10279 / NRRL Y-324) (Yeast).